A 159-amino-acid polypeptide reads, in one-letter code: MADS-box transcription factor 23 (159 aa).

One can recognise an MADS-box domain in the interval 1–61; it reads MGRGKIEIKR…SRLYDFASSS (61 aa). Positions 86-159 constitute a K-box domain; that stretch reads AKLWQQEAAS…QELSRKVVTT (74 aa).

As to expression, expressed in seedling roots and developing seeds.

It localises to the nucleus. Probable transcription factor. This chain is MADS-box transcription factor 23 (MADS23), found in Oryza sativa subsp. japonica (Rice).